The chain runs to 188 residues: D-glycero-beta-D-manno-heptose-1,7-bisphosphate 7-phosphatase (188 aa).

Zn(2+) is bound by residues C92, H94, C107, and C109.

The protein belongs to the GmhB family.

Its subcellular location is the cytoplasm. It carries out the reaction D-glycero-beta-D-manno-heptose 1,7-bisphosphate + H2O = D-glycero-beta-D-manno-heptose 1-phosphate + phosphate. The protein operates within nucleotide-sugar biosynthesis; ADP-L-glycero-beta-D-manno-heptose biosynthesis; ADP-L-glycero-beta-D-manno-heptose from D-glycero-beta-D-manno-heptose 7-phosphate: step 2/4. Its pathway is bacterial outer membrane biogenesis; LPS core biosynthesis. In terms of biological role, converts the D-glycero-beta-D-manno-heptose 1,7-bisphosphate intermediate into D-glycero-beta-D-manno-heptose 1-phosphate by removing the phosphate group at the C-7 position. The chain is D-glycero-beta-D-manno-heptose-1,7-bisphosphate 7-phosphatase (gmhB1) from Photorhabdus laumondii subsp. laumondii (strain DSM 15139 / CIP 105565 / TT01) (Photorhabdus luminescens subsp. laumondii).